We begin with the raw amino-acid sequence, 29 residues long: Cytochrome b6-f complex subunit 8 (29 aa).

Residues Ile-3–Val-23 traverse the membrane as a helical segment.

It belongs to the PetN family. As to quaternary structure, the 4 large subunits of the cytochrome b6-f complex are cytochrome b6, subunit IV (17 kDa polypeptide, PetD), cytochrome f and the Rieske protein, while the 4 small subunits are PetG, PetL, PetM and PetN. The complex functions as a dimer.

It localises to the cellular thylakoid membrane. In terms of biological role, component of the cytochrome b6-f complex, which mediates electron transfer between photosystem II (PSII) and photosystem I (PSI), cyclic electron flow around PSI, and state transitions. This is Cytochrome b6-f complex subunit 8 from Microcystis aeruginosa (strain NIES-843 / IAM M-2473).